The sequence spans 496 residues: Ankyrin repeat domain-containing protein 34A (496 aa).

ANK repeat units lie at residues 4–33, 37–72, 76–106, and 110–139; these read TEGH…YVNE, QGET…DPNI, LGRT…DPSV, and AGAS…AKGT. Gln-15 carries the post-translational modification N5-methylglutamine. Composition is skewed to polar residues over residues 147–162 and 180–191; these read DTSP…YLNS and FCTSPSEIQLQT. The tract at residues 147–473 is disordered; the sequence is DTSPSGTKKT…TKRKLVRRHS (327 aa). Over residues 204–214 the composition is skewed to basic and acidic residues; it reads AQEEEEKRDVF. Positions 218 to 233 are enriched in pro residues; that stretch reads LPKPPDDPSPSEPLPK. The segment covering 234 to 243 has biased composition (basic residues); that stretch reads PPRHPPKPLK. Thr-316 carries the post-translational modification Phosphothreonine. Residues 463 to 473 show a composition bias toward basic residues; it reads RTKRKLVRRHS.

This sequence belongs to the ANKRD34 family. In terms of processing, methylated at Gln-15 by N6AMT1.

This is Ankyrin repeat domain-containing protein 34A (ANKRD34A) from Homo sapiens (Human).